We begin with the raw amino-acid sequence, 91 residues long: Potassium channel toxin Meg-beta-KTx1 (91 aa).

A signal peptide spans 1-19; sequence MQRNLVVLLFLGMVALSSC. The propeptide occupies 20-27; that stretch reads GLREKHFQ. In terms of domain architecture, BetaSPN-type CS-alpha/beta spans 54–91; the sequence is QFGCPAYQGYCDDHCQDIKKQEGFCHGFKCKCGIPMGF. 3 disulfides stabilise this stretch: Cys57–Cys78, Cys64–Cys83, and Cys68–Cys85.

Belongs to the long chain scorpion toxin family. Class 1 subfamily. In terms of tissue distribution, expressed by the venom gland.

It is found in the secreted. Inhibits voltage-gated potassium channel. The sequence is that of Potassium channel toxin Meg-beta-KTx1 from Mesobuthus gibbosus (Mediterranean checkered scorpion).